The sequence spans 252 residues: Serine/threonine phosphatase stp (252 aa).

Basic and acidic residues predominate over residues 1 to 18; sequence MHAEFRTDRGRIRHHNED. The tract at residues 1–23 is disordered; that stretch reads MHAEFRTDRGRIRHHNEDNGGVF. The 241-residue stretch at 2–242 folds into the PPM-type phosphatase domain; the sequence is HAEFRTDRGR…DNITVLLVER (241 aa). Residues D36, G37, D194, and D233 each coordinate Mn(2+).

It belongs to the PP2C family. It depends on Mn(2+) as a cofactor.

The protein localises to the cytoplasm. The protein resides in the membrane. The enzyme catalyses O-phospho-L-seryl-[protein] + H2O = L-seryl-[protein] + phosphate. It catalyses the reaction O-phospho-L-threonyl-[protein] + H2O = L-threonyl-[protein] + phosphate. Protein phosphatase that dephosphorylates EF-Tu. In Listeria monocytogenes serotype 4b (strain F2365), this protein is Serine/threonine phosphatase stp (stp).